A 61-amino-acid polypeptide reads, in one-letter code: Small ribosomal subunit protein uS14 (61 aa).

Cys-24, Cys-27, Cys-40, and Cys-43 together coordinate Zn(2+).

Belongs to the universal ribosomal protein uS14 family. Zinc-binding uS14 subfamily. As to quaternary structure, part of the 30S ribosomal subunit. Contacts proteins S3 and S10. Requires Zn(2+) as cofactor.

Binds 16S rRNA, required for the assembly of 30S particles and may also be responsible for determining the conformation of the 16S rRNA at the A site. This chain is Small ribosomal subunit protein uS14, found in Bacillus anthracis (strain A0248).